The chain runs to 193 residues: Peptidyl-tRNA hydrolase (193 aa).

Residue Y17 coordinates tRNA. The active-site Proton acceptor is the H22. TRNA is bound by residues Y68, N70, and N116.

Belongs to the PTH family. Monomer.

It is found in the cytoplasm. It catalyses the reaction an N-acyl-L-alpha-aminoacyl-tRNA + H2O = an N-acyl-L-amino acid + a tRNA + H(+). Its function is as follows. Hydrolyzes ribosome-free peptidyl-tRNAs (with 1 or more amino acids incorporated), which drop off the ribosome during protein synthesis, or as a result of ribosome stalling. Functionally, catalyzes the release of premature peptidyl moieties from peptidyl-tRNA molecules trapped in stalled 50S ribosomal subunits, and thus maintains levels of free tRNAs and 50S ribosomes. The chain is Peptidyl-tRNA hydrolase from Acinetobacter baumannii (strain AB0057).